The primary structure comprises 389 residues: 26S proteasome regulatory subunit 10B (389 aa).

Lysine 72 carries the N6-acetyllysine modification. 174-181 is a binding site for ATP; sequence GPPGTGKT. The residue at position 206 (lysine 206) is an N6-acetyllysine. Residue serine 244 is modified to Phosphoserine.

The protein belongs to the AAA ATPase family. In terms of assembly, component of the 19S proteasome regulatory particle complex. The 26S proteasome consists of a 20S core particle (CP) and two 19S regulatory subunits (RP). The regulatory particle is made of a lid composed of 9 subunits, a base containing 6 ATPases including PSMC6 and few additional components. Interacts with PAAF1.

It localises to the cytoplasm. It is found in the nucleus. Functionally, component of the 26S proteasome, a multiprotein complex involved in the ATP-dependent degradation of ubiquitinated proteins. This complex plays a key role in the maintenance of protein homeostasis by removing misfolded or damaged proteins, which could impair cellular functions, and by removing proteins whose functions are no longer required. Therefore, the proteasome participates in numerous cellular processes, including cell cycle progression, apoptosis, or DNA damage repair. PSMC6 belongs to the heterohexameric ring of AAA (ATPases associated with diverse cellular activities) proteins that unfolds ubiquitinated target proteins that are concurrently translocated into a proteolytic chamber and degraded into peptides. This chain is 26S proteasome regulatory subunit 10B (PSMC6), found in Bos taurus (Bovine).